A 532-amino-acid polypeptide reads, in one-letter code: E3 ubiquitin-protein ligase MGRN1 (532 aa).

Residue glycine 2 is the site of N-myristoyl glycine attachment. Residues 277–316 (ECVVCLSDLRDTLILPCRHLCLCTSCADTLRYQANNCPIC) form an RING-type zinc finger. A Required for TSG101-binding motif is present at residues 384-387 (PSAP). Tyrosine 389 carries the post-translational modification Phosphotyrosine. Residues 419–518 (LQKGKTQSKS…QPVPPADIYL (100 aa)) form a disordered region. Polar residues predominate over residues 422 to 435 (GKTQSKSPDSTLRS). Residues serine 428, serine 449, serine 452, and serine 501 each carry the phosphoserine modification. Residues 442–453 (EEDEEKLSEDSD) are compositionally biased toward acidic residues.

As to quaternary structure, interacts with MC1R and MC4R. Interacts with TSG101. Interacts with mislocalized cytosolically exposed PRNP; this interaction alters MGRN1 subcellular location and causes lysosomal enlargement. Autoubiquitinated in vitro. As to expression, widely expressed, with highest levels in brain, heart, kidney and liver. In the CNS, especially prominent in the Purkinje cells of the cerebellum. In the skin, expressed in the basal layer of the epidermis and hair follicles, primarily in the outer root sheath. Isoforms 1, 3, 4 and 5 are equally expressed in the liver. Isoforms 1, 3 and 4 are most abundant in brain, kidney and heart, respectively.

The protein localises to the early endosome. It localises to the cytoplasm. It is found in the cell membrane. The protein resides in the nucleus. It catalyses the reaction S-ubiquitinyl-[E2 ubiquitin-conjugating enzyme]-L-cysteine + [acceptor protein]-L-lysine = [E2 ubiquitin-conjugating enzyme]-L-cysteine + N(6)-ubiquitinyl-[acceptor protein]-L-lysine.. It functions in the pathway protein modification; protein ubiquitination. Functionally, E3 ubiquitin-protein ligase. Mediates TSG101 monoubiquitination at multiple sites. Plays a role in the regulation of endosome-to-lysosome trafficking. Impairs MC1R- and MC4R-signaling by competing with GNAS-binding to MCRs and inhibiting agonist-induced cAMP production. Does not inhibit ADRB2-signaling. Does not promote MC1R ubiquitination. Also acts as a negative regulator of hedgehog signaling. The protein is E3 ubiquitin-protein ligase MGRN1 (Mgrn1) of Mus musculus (Mouse).